The sequence spans 75 residues: Large ribosomal subunit protein bL31 (75 aa).

Residues Cys-16, Cys-18, Cys-36, and Cys-39 each contribute to the Zn(2+) site.

The protein belongs to the bacterial ribosomal protein bL31 family. Type A subfamily. In terms of assembly, part of the 50S ribosomal subunit. Zn(2+) serves as cofactor.

Functionally, binds the 23S rRNA. The sequence is that of Large ribosomal subunit protein bL31 from Desulforapulum autotrophicum (strain ATCC 43914 / DSM 3382 / VKM B-1955 / HRM2) (Desulfobacterium autotrophicum).